We begin with the raw amino-acid sequence, 142 residues long: Type 3 secretion system pilotin (142 aa).

The first 23 residues, 1 to 23 (MIRHGSNKLKIFILSILLLTLSG), serve as a signal peptide directing secretion. Cysteine 24 is lipidated: N-palmitoyl cysteine. Cysteine 24 carries the S-diacylglycerol cysteine lipid modification.

This sequence belongs to the MxiM family. In terms of assembly, monomer. Interacts with the secretin MxiD/SctC.

The protein localises to the cell outer membrane. Functionally, involved in the synthesis of the type III secretion system (T3SS), also called injectisome, which is used to inject bacterial effector proteins into eukaryotic host cells. Pilot protein that is required for the proper localization of the secretin MxiD/SctC in the outer membrane. Also influences both MxiD/SctC multimerization and stability. Required for both Ipa translocation and tissue culture cell invasion. Binds lipids. This chain is Type 3 secretion system pilotin, found in Shigella flexneri.